Reading from the N-terminus, the 405-residue chain is Acetate kinase (405 aa).

Position 7 (asparagine 7) interacts with Mg(2+). Lysine 14 serves as a coordination point for ATP. Arginine 99 contacts substrate. Residue aspartate 156 is the Proton donor/acceptor of the active site. Residues 215-219 (HLGNG), 290-292 (DMR), and 338-342 (GVGEH) contribute to the ATP site. Glutamate 391 is a binding site for Mg(2+).

Belongs to the acetokinase family. Homodimer. The cofactor is Mg(2+). Requires Mn(2+) as cofactor.

It localises to the cytoplasm. It carries out the reaction acetate + ATP = acetyl phosphate + ADP. The protein operates within metabolic intermediate biosynthesis; acetyl-CoA biosynthesis; acetyl-CoA from acetate: step 1/2. Its function is as follows. Catalyzes the formation of acetyl phosphate from acetate and ATP. Can also catalyze the reverse reaction. In Nostoc punctiforme (strain ATCC 29133 / PCC 73102), this protein is Acetate kinase.